The primary structure comprises 419 residues: MEATLNLEPSGRSCWDEPLSIAVRGLAPEQPVTLRSVLRDEKGALFRAHARYRADSHGELDLARTPALGGSFSGLEPMGLLWAMEPDRPFWRLVKRDVQTPFVVELEVLDGHEPDGGQRLAHAVHERHFLAPGVRRVPVREGRVRATLFLPPEPGPFPGIIDLFGVGGGLLEYRASLLAGKGFAVMALAYYNYDDLPKNMETMHMEYFEEAVNYLRSHPEVKGPGIGLLGISKGGELGLAMASFLKGITAAVVINGSVAAVGNTISYKDETIPPVTILRNQVKMTKDGLKDVVDALQSPLVDKKSFIPVERSDTTFLFLVGQDDHNWKSEFYADEISKRLQAHGKEKPQIICYPAAGHYIEPPYFPLCSAGMHLLVGANITFGGEPKPHAMAQLDAWQQLQTFFHKQLGSECLHVSPKI.

Residues Ser-232, Asp-324, and His-358 each act as charge relay system in the active site. Ser-416 bears the Phosphoserine mark.

The protein belongs to the C/M/P thioester hydrolase family. In terms of assembly, monomer. In terms of tissue distribution, expressed in heart, kidney, brown adipose tissue, white adipose tissue, adrenal gland and muscle.

The protein resides in the cytoplasm. The protein localises to the cytosol. It carries out the reaction hexadecanoyl-CoA + H2O = hexadecanoate + CoA + H(+). It catalyses the reaction decanoyl-CoA + H2O = decanoate + CoA + H(+). The enzyme catalyses dodecanoyl-CoA + H2O = dodecanoate + CoA + H(+). The catalysed reaction is tetradecanoyl-CoA + H2O = tetradecanoate + CoA + H(+). It carries out the reaction octadecanoyl-CoA + H2O = octadecanoate + CoA + H(+). It catalyses the reaction eicosanoyl-CoA + H2O = eicosanoate + CoA + H(+). The enzyme catalyses (9Z)-octadecenoyl-CoA + H2O = (9Z)-octadecenoate + CoA + H(+). The catalysed reaction is (9Z)-hexadecenoyl-CoA + H2O = (9Z)-hexadecenoate + CoA + H(+). It carries out the reaction (9E)-octadecenoyl-CoA + H2O = (9E)-octadecenoate + CoA + H(+). Its pathway is lipid metabolism; fatty acid metabolism. Its function is as follows. Catalyzes the hydrolysis of acyl-CoAs into free fatty acids and coenzyme A (CoASH), regulating their respective intracellular levels. More active towards saturated and unsaturated long chain fatty acyl-CoAs (C12-C20). The sequence is that of Acyl-coenzyme A thioesterase 1 (Acot1) from Mus musculus (Mouse).